The primary structure comprises 149 residues: SsrA-binding protein (149 aa).

This sequence belongs to the SmpB family.

The protein localises to the cytoplasm. Functionally, required for rescue of stalled ribosomes mediated by trans-translation. Binds to transfer-messenger RNA (tmRNA), required for stable association of tmRNA with ribosomes. tmRNA and SmpB together mimic tRNA shape, replacing the anticodon stem-loop with SmpB. tmRNA is encoded by the ssrA gene; the 2 termini fold to resemble tRNA(Ala) and it encodes a 'tag peptide', a short internal open reading frame. During trans-translation Ala-aminoacylated tmRNA acts like a tRNA, entering the A-site of stalled ribosomes, displacing the stalled mRNA. The ribosome then switches to translate the ORF on the tmRNA; the nascent peptide is terminated with the 'tag peptide' encoded by the tmRNA and targeted for degradation. The ribosome is freed to recommence translation, which seems to be the essential function of trans-translation. In Carboxydothermus hydrogenoformans (strain ATCC BAA-161 / DSM 6008 / Z-2901), this protein is SsrA-binding protein.